The sequence spans 188 residues: Apolipoprotein M (188 aa).

A signal peptide (not cleaved) is located at residues 1 to 22 (MFHQIWAALLYFYGIILNSIYQ). 3 cysteine pairs are disulfide-bonded: cysteine 23–cysteine 167, cysteine 95–cysteine 183, and cysteine 128–cysteine 157. Asparagine 135 carries an N-linked (GlcNAc...) asparagine glycan. The tetradecanoate site is built by glutamate 136 and arginine 143.

Belongs to the calycin superfamily. Lipocalin family. Highly divergent. In terms of assembly, interacts with LRP2; LRP2 mediates APOM renal uptake and subsequent lysosomal degradation. As to expression, plasma protein. Expressed in liver and kidney.

It localises to the secreted. Functionally, probably involved in lipid transport. Can bind sphingosine-1-phosphate, myristic acid, palmitic acid and stearic acid, retinol, all-trans-retinoic acid and 9-cis-retinoic acid. The chain is Apolipoprotein M (APOM) from Homo sapiens (Human).